Reading from the N-terminus, the 139-residue chain is Putative pre-16S rRNA nuclease (139 aa).

Belongs to the YqgF nuclease family.

It localises to the cytoplasm. Its function is as follows. Could be a nuclease involved in processing of the 5'-end of pre-16S rRNA. The polypeptide is Putative pre-16S rRNA nuclease (Streptococcus pyogenes serotype M1).